Consider the following 168-residue polypeptide: Large ribosomal subunit protein uL10 (168 aa).

The protein belongs to the universal ribosomal protein uL10 family. Part of the ribosomal stalk of the 50S ribosomal subunit. The N-terminus interacts with L11 and the large rRNA to form the base of the stalk. The C-terminus forms an elongated spine to which L12 dimers bind in a sequential fashion forming a multimeric L10(L12)X complex.

Functionally, forms part of the ribosomal stalk, playing a central role in the interaction of the ribosome with GTP-bound translation factors. The chain is Large ribosomal subunit protein uL10 from Clostridium acetobutylicum (strain ATCC 824 / DSM 792 / JCM 1419 / IAM 19013 / LMG 5710 / NBRC 13948 / NRRL B-527 / VKM B-1787 / 2291 / W).